A 536-amino-acid polypeptide reads, in one-letter code: Chaperonin GroEL (536 aa).

ATP-binding positions include Thr-29–Pro-32, Asp-86–Thr-90, Gly-413, Asp-476–Ala-478, and Asp-492.

This sequence belongs to the chaperonin (HSP60) family. Forms a cylinder of 14 subunits composed of two heptameric rings stacked back-to-back. Interacts with the co-chaperonin GroES.

The protein resides in the cytoplasm. It carries out the reaction ATP + H2O + a folded polypeptide = ADP + phosphate + an unfolded polypeptide.. Together with its co-chaperonin GroES, plays an essential role in assisting protein folding. The GroEL-GroES system forms a nano-cage that allows encapsulation of the non-native substrate proteins and provides a physical environment optimized to promote and accelerate protein folding. The polypeptide is Chaperonin GroEL (Methanococcus vannielii (strain ATCC 35089 / DSM 1224 / JCM 13029 / OCM 148 / SB)).